A 199-amino-acid polypeptide reads, in one-letter code: Pre T-cell antigen receptor alpha (199 aa).

The signal sequence occupies residues 1-16 (MARTWLLLFLGLRCQA). At 17–155 (LPSGIAGTPF…RQVLRLSVLR (139 aa)) the chain is on the extracellular side. The cysteines at positions 47 and 107 are disulfide-linked. 2 N-linked (GlcNAc...) asparagine glycosylation sites follow: N67 and N117. The disordered stretch occupies residues 117–139 (NRSTHPLQLSGEEASTDRTCPQE). A helical transmembrane segment spans residues 156–176 (LLLFKLLLLDVFLTCSRLCVL). The Cytoplasmic segment spans residues 177–199 (AGQHLLPPPSSKQAPASTHQSWT).

As to quaternary structure, heterodimer with TCRB; disulfide linked. This heterodimer assembles with CD3 proteins into a signaling-competent pre-T-cell receptor complex. Interacts with RHBDD1. In terms of tissue distribution, found in CD45+ but not in the CD45- fetal liver cells.

It localises to the membrane. Its subcellular location is the cell membrane. Its function is as follows. Component of the pre-T-cell receptor complex (composed of PTCRA, TCRB and the CD3 complex) that has a crucial role in early T-cell development, particularly alpha-beta T cell differentiation. The protein is Pre T-cell antigen receptor alpha of Rattus norvegicus (Rat).